Consider the following 235-residue polypeptide: Aspartate/glutamate leucyltransferase (235 aa).

Belongs to the R-transferase family. Bpt subfamily.

The protein resides in the cytoplasm. The enzyme catalyses N-terminal L-glutamyl-[protein] + L-leucyl-tRNA(Leu) = N-terminal L-leucyl-L-glutamyl-[protein] + tRNA(Leu) + H(+). The catalysed reaction is N-terminal L-aspartyl-[protein] + L-leucyl-tRNA(Leu) = N-terminal L-leucyl-L-aspartyl-[protein] + tRNA(Leu) + H(+). Functionally, functions in the N-end rule pathway of protein degradation where it conjugates Leu from its aminoacyl-tRNA to the N-termini of proteins containing an N-terminal aspartate or glutamate. The chain is Aspartate/glutamate leucyltransferase from Pseudomonas fluorescens (strain SBW25).